Here is a 250-residue protein sequence, read N- to C-terminus: Alpha/beta hydrolase nvfD (250 aa).

Residues Asp-198 and His-226 each act as charge relay system in the active site.

The protein belongs to the AB hydrolase superfamily.

It participates in secondary metabolite biosynthesis; terpenoid biosynthesis. Functionally, alpha/beta hydrolase; part of the gene cluster that mediates the biosynthesis of novofumigatonin, a heavily oxygenated meroterpenoid containing a unique orthoester moiety. The first step of the pathway is the synthesis of 3,5-dimethylorsellinic acid (DMOA) by the polyketide synthase nvfA via condensation of one acetyl-CoA starter unit with 3 malonyl-CoA units and 2 methylations. DMOA is then converted to farnesyl-DMOA by the farnesyltransferase nvfB. Epoxydation by FAD-dependent monooxygenase nvfK, followed by a protonation-initiated cyclization catalyzed by the terpene cyclase nvfL leads to the production of asnavolin H. The short chain dehydrogenase nvfC then as a 3-OH dehydrogenase of asnovolin H to yield chemesin D. There are two branches to synthesize asnovolin A from chemesin D. In one branch, chemesin D undergoes Baeyer-Villiger oxidation by nvfH, methylation by nvfJ, and enoyl reduction by the nvfM D enoylreductase that reduces the double bond between C-5'and C-6', to form respectively asnovolin I, asnovolin K, and asnovolin A. In the other branch, the methylation precedes the Baeyer-Villiger oxidation and the enoyl reduction to yield asnovolin A via the asnovolin J intermediate. Asnovolin A is further converted to fumigatonoid A by the Fe(II)/2-oxoglutarate-dependent dioxygenase nvfI that catalyzes an endoperoxidation reaction. The alpha/beta hydrolase nvfD then acts as an epimerase that converts fumigatonoid A to its C-5' epimer, which then undergoes spontaneous or nvfD-catalyzed lactonization. The following step utilizes the ketoreductase nvfG to produce fumigatonoid B. The dioxygenase nvfE further converts fumigatonoid B into fumigatonoid C. Finally the Fe(II)/2-oxoglutarate-dependent dioxygenase nvfF catalyzes two rounds of oxidation to transform fumigatonoid C into the end product, novofumigatonin A. This chain is Alpha/beta hydrolase nvfD, found in Aspergillus novofumigatus (strain IBT 16806).